Reading from the N-terminus, the 86-residue chain is Co-chaperonin GroES (86 aa).

Belongs to the GroES chaperonin family. In terms of assembly, heptamer of 7 subunits arranged in a ring. Interacts with the chaperonin GroEL.

The protein resides in the cytoplasm. Its function is as follows. Together with the chaperonin GroEL, plays an essential role in assisting protein folding. The GroEL-GroES system forms a nano-cage that allows encapsulation of the non-native substrate proteins and provides a physical environment optimized to promote and accelerate protein folding. GroES binds to the apical surface of the GroEL ring, thereby capping the opening of the GroEL channel. The polypeptide is Co-chaperonin GroES (Campylobacter jejuni subsp. jejuni serotype O:6 (strain 81116 / NCTC 11828)).